The primary structure comprises 504 residues: Maturase K (504 aa).

It belongs to the intron maturase 2 family. MatK subfamily.

The protein localises to the plastid. It is found in the chloroplast. Its function is as follows. Usually encoded in the trnK tRNA gene intron. Probably assists in splicing its own and other chloroplast group II introns. The chain is Maturase K from Lobularia maritima (Sweet alyssum).